Here is a 338-residue protein sequence, read N- to C-terminus: MTQQITVTEHLLLHQKQIPGATGQFTHLFNELVLSAKIISREVNKAGLVDVLGFTGEVNVQGEEVKKLDEYANRILIHRMARSGVLCAMASEENADIIEIPHGLPQGNYIIIFDPLDGSSNIDVNVNIGTIFSIFRRKSKLGTPVQSTDVLQAGCEQVAAGYILYGSSTMLVFTTGDGVHGFTMDPGVGEFLLSHPNMKIPDTGNIYSVNEGYWPYWSEATKKVVGHFKSRDNIHGKPYSLRYIGSLVADFHRNLIYGGVFMYPADDRDPKKPRGKLRLLCEASPMAMLIEQAGGRATDGTQRILDIIPDDLHQRVPLFIGSRHEVETISNIYKENEG.

Residues Glu92, Asp114, Leu116, and Asp117 each coordinate Mg(2+). Substrate contacts are provided by residues 117-120 (DGSS), Asn210, Tyr243, and Lys276. Glu282 contributes to the Mg(2+) binding site.

This sequence belongs to the FBPase class 1 family. In terms of assembly, homotetramer. It depends on Mg(2+) as a cofactor.

The protein resides in the cytoplasm. The enzyme catalyses beta-D-fructose 1,6-bisphosphate + H2O = beta-D-fructose 6-phosphate + phosphate. It participates in carbohydrate biosynthesis; gluconeogenesis. The polypeptide is Fructose-1,6-bisphosphatase class 1 (Maridesulfovibrio salexigens (strain ATCC 14822 / DSM 2638 / NCIMB 8403 / VKM B-1763) (Desulfovibrio salexigens)).